A 424-amino-acid polypeptide reads, in one-letter code: Histidine--tRNA ligase (424 aa).

The protein belongs to the class-II aminoacyl-tRNA synthetase family. Homodimer.

Its subcellular location is the cytoplasm. It carries out the reaction tRNA(His) + L-histidine + ATP = L-histidyl-tRNA(His) + AMP + diphosphate + H(+). The sequence is that of Histidine--tRNA ligase from Salmonella paratyphi B (strain ATCC BAA-1250 / SPB7).